We begin with the raw amino-acid sequence, 741 residues long: Zinc metalloproteinase nas-30 (741 aa).

Low complexity-rich tracts occupy residues 71–85 (KPAP…APAP) and 97–118 (PAPK…DAPP). The tract at residues 71 to 122 (KPAPAAAGPRSAPAPTNEDYNTDIDVPAPKAKARAAPTPRRAQADAPPVYRQ) is disordered. The Peptidase M12A domain occupies 324–516 (KVITGSVYRW…VKQVNRLYCN (193 aa)). 6 disulfide bridges follow: C364–C515, C385–C404, C519–C539, C541–C550, C562–C583, and C610–C630. H412 contributes to the Zn(2+) binding site. Residue E413 is part of the active site. Positions 416 and 422 each coordinate Zn(2+). Positions 539–550 (CKCPDGLGGKLC) constitute an EGF-like domain. In terms of domain architecture, CUB spans 550 to 648 (CGRAAKGTDH…ISDQSEALIL (99 aa)). The N-linked (GlcNAc...) asparagine glycan is linked to N633.

Zn(2+) is required as a cofactor.

Its function is as follows. Metalloprotease. This chain is Zinc metalloproteinase nas-30, found in Caenorhabditis elegans.